The primary structure comprises 61 residues: Small ribosomal subunit protein uS14 (61 aa).

The Zn(2+) site is built by Cys24, Cys27, Cys40, and Cys43.

Belongs to the universal ribosomal protein uS14 family. Zinc-binding uS14 subfamily. As to quaternary structure, part of the 30S ribosomal subunit. Contacts proteins S3 and S10. It depends on Zn(2+) as a cofactor.

Functionally, binds 16S rRNA, required for the assembly of 30S particles and may also be responsible for determining the conformation of the 16S rRNA at the A site. This chain is Small ribosomal subunit protein uS14, found in Mycoplasmopsis agalactiae (strain NCTC 10123 / CIP 59.7 / PG2) (Mycoplasma agalactiae).